The following is a 257-amino-acid chain: 5'-nucleotidase SurE (257 aa).

Residues aspartate 9, aspartate 10, serine 42, and asparagine 96 each contribute to the a divalent metal cation site.

It belongs to the SurE nucleotidase family. The cofactor is a divalent metal cation.

The protein localises to the cytoplasm. It catalyses the reaction a ribonucleoside 5'-phosphate + H2O = a ribonucleoside + phosphate. Its function is as follows. Nucleotidase that shows phosphatase activity on nucleoside 5'-monophosphates. The protein is 5'-nucleotidase SurE of Campylobacter lari (strain RM2100 / D67 / ATCC BAA-1060).